Consider the following 315-residue polypeptide: MEIRPLLMCFALCVVYATSKPTEKKDRVHHDAPLSSKEHDDGTNFEYDHDAFLGEEEAKTFDDLTPEESKNRLGKIVEKIDADEDGFVTEAELKAWIKKAQKKYIYDNVERQWKDFDLNNDRMISWEEYKNVTYGTYLDDPEPDDGYNYKQMMARDERRFKMADGNGDHIADKEEFTAFLHPEEYEHMKDIVVLETMEDIDKNGDGFIDLEEYIGDMYNHEDEMDEPEWVATEREQFSEFRDKNKDGKMDREETMDWILPADYDHAEAEAKHLVYESDTNKDGKLTKEEILNKYDLFVGSQATDFGEALVRHDEF.

An N-terminal signal peptide occupies residues 1-19 (MEIRPLLMCFALCVVYATS). EF-hand domains lie at 68 to 103 (ESKN…AQKK), 104 to 139 (YIYD…TYLD), 151 to 186 (QMMA…EEYE), 188 to 223 (MKDI…HEDE), 229 to 264 (WVAT…ADYD), and 265 to 300 (HAEA…FVGS). 9 residues coordinate Ca(2+): D81, D83, D85, E92, D117, N119, D121, M123, and E128. N-linked (GlcNAc...) asparagine glycosylation is present at N131. 18 residues coordinate Ca(2+): D164, N166, D168, E175, D201, N203, D205, E212, D242, N244, D246, K248, E253, D278, N280, D282, K284, and E289. A Prevents secretion from ER motif is present at residues 312–315 (HDEF).

This sequence belongs to the CREC family. In terms of assembly, interacts with ggcx.

The protein resides in the endoplasmic reticulum membrane. It localises to the golgi apparatus. It is found in the secreted. Its subcellular location is the melanosome. The protein localises to the sarcoplasmic reticulum lumen. Involved in regulation of vitamin K-dependent carboxylation of multiple N-terminal glutamate residues. Seems to inhibit gamma-carboxylase ggcx. Binds 7 calcium ions with a low affinity. This is Calumenin-A (calua) from Danio rerio (Zebrafish).